Reading from the N-terminus, the 603-residue chain is Methionine--tRNA ligase (603 aa).

The short motif at Pro14–His24 is the 'HIGH' region element. Zn(2+) contacts are provided by Cys146, Cys149, Cys159, and Cys162. The short motif at Lys354–Ser358 is the 'KMSKS' region element. Ser357 contacts ATP.

This sequence belongs to the class-I aminoacyl-tRNA synthetase family. MetG type 1 subfamily. In terms of assembly, monomer. Zn(2+) serves as cofactor.

The protein resides in the cytoplasm. The catalysed reaction is tRNA(Met) + L-methionine + ATP = L-methionyl-tRNA(Met) + AMP + diphosphate. Its function is as follows. Is required not only for elongation of protein synthesis but also for the initiation of all mRNA translation through initiator tRNA(fMet) aminoacylation. This chain is Methionine--tRNA ligase, found in Salinispora tropica (strain ATCC BAA-916 / DSM 44818 / JCM 13857 / NBRC 105044 / CNB-440).